The chain runs to 193 residues: Ubiquitin-conjugating enzyme E2 E1 (193 aa).

The tract at residues 1–45 is disordered; the sequence is MSDDDSRASTSSSSSSSSNQQTEKEGSTPKKKESKVSMSKNSKLL. Residue Ser2 is modified to N-acetylserine. Residues 8 to 18 show a composition bias toward low complexity; that stretch reads ASTSSSSSSSS. Positions 22-35 are enriched in basic and acidic residues; sequence TEKEGSTPKKKESK. The span at 36–45 shows a compositional bias: polar residues; sequence VSMSKNSKLL. Positions 47–193 constitute a UBC core domain; it reads TSAKRIQKEL…ARQWTKRYAT (147 aa). Catalysis depends on Cys131, which acts as the Glycyl thioester intermediate. Lys136 participates in a covalent cross-link: Glycyl lysine isopeptide (Lys-Gly) (interchain with G-Cter in ISG15).

This sequence belongs to the ubiquitin-conjugating enzyme family. In terms of assembly, interacts with RNF14. In terms of processing, ISGylation suppresses ubiquitin E2 enzyme activity. Autoubiquitinated.

The protein localises to the nucleus. The catalysed reaction is S-ubiquitinyl-[E1 ubiquitin-activating enzyme]-L-cysteine + [E2 ubiquitin-conjugating enzyme]-L-cysteine = [E1 ubiquitin-activating enzyme]-L-cysteine + S-ubiquitinyl-[E2 ubiquitin-conjugating enzyme]-L-cysteine.. It carries out the reaction S-ubiquitinyl-[E1 ubiquitin-activating enzyme]-L-cysteine + [acceptor protein]-L-lysine = [E1 ubiquitin-activating enzyme]-L-cysteine + N(6)-monoubiquitinyl-[acceptor protein]-L-lysine.. The protein operates within protein modification; protein ubiquitination. Accepts ubiquitin from the E1 complex and catalyzes its covalent attachment to other proteins. Catalyzes the covalent attachment of ISG15 to other proteins. Mediates the selective degradation of short-lived and abnormal proteins. In vitro also catalyzes 'Lys-48'-linked polyubiquitination. The chain is Ubiquitin-conjugating enzyme E2 E1 (Ube2e1) from Mus musculus (Mouse).